The following is a 1485-amino-acid chain: Dicer-like protein 2 (1485 aa).

A compositionally biased stretch (low complexity) spans 1–11 (MSSQDESASSS). The interval 1 to 61 (MSSQDESASS…EPQPSGNGPR (61 aa)) is disordered. Residues 72 to 250 (MFQASMQQNI…MEDLESSLDS (179 aa)) enclose the Helicase ATP-binding domain. Residue 85 to 92 (MDTGSGKT) participates in ATP binding. A DEAH box motif is present at residues 193 to 196 (DEAH). The region spanning 415-579 (KLQVLLRILR…RYENDMRELD (165 aa)) is the Helicase C-terminal domain. Positions 609-712 (AKGHLEHFCR…LPIRESDFVD (104 aa)) constitute a Dicer dsRNA-binding fold domain. RNase III domains follow at residues 988 to 1127 (AQEL…IEGG) and 1168 to 1358 (LGPL…VDSG). Mg(2+) contacts are provided by Glu1208, Asp1344, and Glu1347. A DRBM domain is found at 1388 to 1469 (HPKEELGRVA…ALEVIRVWEE (82 aa)).

It belongs to the helicase family. Dicer subfamily. The cofactor is Mg(2+). It depends on Mn(2+) as a cofactor.

Dicer-like endonuclease involved in cleaving double-stranded RNA in the RNA interference (RNAi) pathway. Produces 21 to 25 bp dsRNAs (siRNAs) which target the selective destruction of homologous RNAs leading to sequence-specific suppression of gene expression, called post-transcriptional gene silencing (PTGS). Part of a broad host defense response against viral infection and transposons. The sequence is that of Dicer-like protein 2 (DCL2) from Pyricularia oryzae (strain 70-15 / ATCC MYA-4617 / FGSC 8958) (Rice blast fungus).